A 68-amino-acid chain; its full sequence is MQVYQCCEAIRIAYNQIGSGEQGYVPQAIAATIRALNAVASDERVPADLREQAAYAAANLLISDHEDA.

Belongs to the UPF0253 family.

The protein is UPF0253 protein AHA_2115 of Aeromonas hydrophila subsp. hydrophila (strain ATCC 7966 / DSM 30187 / BCRC 13018 / CCUG 14551 / JCM 1027 / KCTC 2358 / NCIMB 9240 / NCTC 8049).